Reading from the N-terminus, the 431-residue chain is Trigger factor (431 aa).

The region spanning 158–243 is the PPIase FKBP-type domain; sequence GDLVAVETWS…VAEVSEPVVP (86 aa).

It belongs to the FKBP-type PPIase family. Tig subfamily.

It is found in the cytoplasm. It carries out the reaction [protein]-peptidylproline (omega=180) = [protein]-peptidylproline (omega=0). In terms of biological role, involved in protein export. Acts as a chaperone by maintaining the newly synthesized protein in an open conformation. Functions as a peptidyl-prolyl cis-trans isomerase. The polypeptide is Trigger factor (Stenotrophomonas maltophilia (strain R551-3)).